Here is a 284-residue protein sequence, read N- to C-terminus: Bifunctional protein FolD (284 aa).

NADP(+)-binding positions include 166 to 168 (GAS) and Ile232.

Belongs to the tetrahydrofolate dehydrogenase/cyclohydrolase family. In terms of assembly, homodimer.

The enzyme catalyses (6R)-5,10-methylene-5,6,7,8-tetrahydrofolate + NADP(+) = (6R)-5,10-methenyltetrahydrofolate + NADPH. The catalysed reaction is (6R)-5,10-methenyltetrahydrofolate + H2O = (6R)-10-formyltetrahydrofolate + H(+). The protein operates within one-carbon metabolism; tetrahydrofolate interconversion. Its function is as follows. Catalyzes the oxidation of 5,10-methylenetetrahydrofolate to 5,10-methenyltetrahydrofolate and then the hydrolysis of 5,10-methenyltetrahydrofolate to 10-formyltetrahydrofolate. This is Bifunctional protein FolD from Pseudomonas paraeruginosa (strain DSM 24068 / PA7) (Pseudomonas aeruginosa (strain PA7)).